The chain runs to 29 residues: Cytochrome b6-f complex subunit 8 (29 aa).

The helical transmembrane segment at Ile-3–Val-23 threads the bilayer.

The protein belongs to the PetN family. In terms of assembly, the 4 large subunits of the cytochrome b6-f complex are cytochrome b6, subunit IV (17 kDa polypeptide, PetD), cytochrome f and the Rieske protein, while the 4 small subunits are PetG, PetL, PetM and PetN. The complex functions as a dimer.

It localises to the plastid. The protein resides in the chloroplast thylakoid membrane. Functionally, component of the cytochrome b6-f complex, which mediates electron transfer between photosystem II (PSII) and photosystem I (PSI), cyclic electron flow around PSI, and state transitions. The protein is Cytochrome b6-f complex subunit 8 of Phalaenopsis aphrodite subsp. formosana (Moth orchid).